A 449-amino-acid polypeptide reads, in one-letter code: Trigger factor (449 aa).

Positions Gly-173 to Pro-258 constitute a PPIase FKBP-type domain.

This sequence belongs to the FKBP-type PPIase family. Tig subfamily.

It localises to the cytoplasm. The catalysed reaction is [protein]-peptidylproline (omega=180) = [protein]-peptidylproline (omega=0). Involved in protein export. Acts as a chaperone by maintaining the newly synthesized protein in an open conformation. Functions as a peptidyl-prolyl cis-trans isomerase. The protein is Trigger factor of Burkholderia pseudomallei (strain 1710b).